The primary structure comprises 207 residues: Probable GTP-binding protein EngB (207 aa).

One can recognise an EngB-type G domain in the interval D22–D194. GTP-binding positions include G30 to S37, G57 to L61, D75 to G78, T142 to D145, and F173 to A175. S37 and T59 together coordinate Mg(2+).

This sequence belongs to the TRAFAC class TrmE-Era-EngA-EngB-Septin-like GTPase superfamily. EngB GTPase family. The cofactor is Mg(2+).

In terms of biological role, necessary for normal cell division and for the maintenance of normal septation. This chain is Probable GTP-binding protein EngB, found in Syntrophotalea carbinolica (strain DSM 2380 / NBRC 103641 / GraBd1) (Pelobacter carbinolicus).